The sequence spans 92 residues: MRKLRNKDILKVLREIAEYGIPEEILTDHGTQFVAAKSREKVKHILARVRLRESEKFGSVEAVVGWHNEIKPHRSLEWDELCNAFWCKLPPD.

This is an uncharacterized protein from Archaeoglobus fulgidus (strain ATCC 49558 / DSM 4304 / JCM 9628 / NBRC 100126 / VC-16).